The following is a 1672-amino-acid chain: MSSMKWLSATAVFAAVLPSVSGFCFPESKELNFSRTGTSSSTTFTETIGENGTEYIVSGNSSFTNFTNIPVKKPTTDDSSTSTPTTSSAVDPTEKIVRASSSSSPNSGDTSATPDPKGGGAFYNEHSGILSFMARSGVEGSLTLSNIKMTGDGGAIYSQGELLFTDLTGLTIQGNLSQLSGGGIFGGSTISFSGINQATFSSNTAEVVPEETTPNPNPGTQTTTSQPSPTSKVQSLFTYSSSTQANGNGADSQTPSHKPGSGGAIYATGDLTISDSQEIVFSVNKASKDGGAIFAEKNVSFENITTLKVQNNGAEEKGGGIYASGDLSIQSSKQSLFNSNTSKQGGGALYIEGNVDFKDLEEIRIKYNKSGTFETKKVTLSLPEAQTNKSSVTAASQSGPNTTPTPTPPVTAKGGGLYTEKNLSISNITGIIEITNNKATDVGGGAYVKGTLTCKDSHRLQFQKNSSEKKGGGLYTEDTITLSNLTGKTLFQENTAKEEGGGLYIQGDDKTLTMTGLDSFCLIDNTSATHGGGAYVTKEISQTYTSDVEEFPGITPVHGETIISGNKATGGSGGGVCTKHLVLSNLQTISISENFASENGGGACTCPDNFPAPTASTPSTNQTAAPKDDKDFLIDYVVSTTIDKNKATKKGAGVYAKKAKLSRIDELNISDNAAQETGGGFCCTESLELDTIASLSVTKNLAGKEGGGLHAKTLNISNLKSGLSFSNNTANSSSTGVATTATTSQSPTVSSFLPRATAGSSPAPAQTTPTYAGVVGGAIYGETVSFSKCSGLCQFTENSAIDNTPSSPSLNVQGGAIYAKTSLSIEAEDPSTSYVFSKNSVSTGKAQTTGQIAGGAIYSPSVTLNCQTVFSGNSASMATTNPPSGTSPKDTIGGAIAGTTISLSKTSHFSENTADLGAAIGTLSGGSSSNLTEKITLSNGSFTFEKNKANKRGVIYAPSVSIKGNNITFNQNTSTHDGSAIYFTKDATIESLGSVLFTGNNVTAEQASSTATGGQTTNTTNYGAAIFGDPGTQTTDTTLKLIASSGNITFSNNSQNTATNNPATKFCSISGYVKLTLQAAQGKTISFFDSIRTSTKKTGQAQNSYETLDINKTENSNTYAGTVLFSSELHEVKSYVPQNVVLHNGTLVLKKNAELHVVSFEQKEGSKLIMEPGAVLSNQNIANGALAINGLTIDLSSLGAPQTGEVFSPPELRIVATTSNSGGGGGVGGYVTASKNLSAASPTVAATNPTMADNKVFLTGALTLIDPDGNFYQNPILGTDLTDVPLIKLPTTANQVDVSNLTLSGDLSPKKGYTGTWTLNPDPQTGKVVANWKFDMYRRWEYIPRDNHFYANSILGSQNSMIVVKQGLINNMLHNARFDDAAYNNFWVSGVGTFLSQQGTPLSEEFSYYSRGTSVAIDAKPRPDFILGAAFSKMVGRTKAIKKVHNYSHKGSEYSYQASVYGGKFLYFLLNKQHGWALPFLLQGVVSYGHIKHDTTTLYPSIHEKNKGDWEDLGWLVDLRVSMDVKEPSKRSSKRVALYGELEYSSIRQKSFTEIDYDPRRFDDCAYRNLSIPMGCYFEGAIMSYDILMYNKLSLAYMPSIYRNNPVCKYWVLSSNETSKVVCGVPTRTSARAEYSTQLYLGPFWTLYGNYTIDVGMYTLAQMTSCGARMIF.

A signal peptide spans 1-14; that stretch reads MSSMKWLSATAVFA. Disordered regions lie at residues 69–122, 203–263, 384–415, and 734–765; these read IPVK…GGAF, NTAE…GSGG, EAQT…AKGG, and STGV…PAPA. Composition is skewed to low complexity over residues 77–88, 100–111, and 203–234; these read DDSSTSTPTTSS, SSSSSPNSGDTS, and NTAE…SKVQ. Polar residues-rich tracts occupy residues 235–256 and 384–399; these read SLFT…QTPS and EAQT…SQSG. Over residues 734–744 the composition is skewed to low complexity; that stretch reads STGVATTATTS. Residues 1379-1672 enclose the Autotransporter domain; the sequence is DDAAYNNFWV…MTSCGARMIF (294 aa).

It belongs to the PMP outer membrane protein family.

It localises to the secreted. The protein localises to the cell wall. Its subcellular location is the cell outer membrane. The protein is Probable outer membrane protein PmpB (pmpB) of Chlamydia muridarum (strain MoPn / Nigg).